Consider the following 302-residue polypeptide: 4-diphosphocytidyl-2-C-methyl-D-erythritol kinase (302 aa).

Residue Lys13 is part of the active site. Pro101–Ser111 provides a ligand contact to ATP. Asp143 is an active-site residue.

Belongs to the GHMP kinase family. IspE subfamily.

The enzyme catalyses 4-CDP-2-C-methyl-D-erythritol + ATP = 4-CDP-2-C-methyl-D-erythritol 2-phosphate + ADP + H(+). It participates in isoprenoid biosynthesis; isopentenyl diphosphate biosynthesis via DXP pathway; isopentenyl diphosphate from 1-deoxy-D-xylulose 5-phosphate: step 3/6. Functionally, catalyzes the phosphorylation of the position 2 hydroxy group of 4-diphosphocytidyl-2C-methyl-D-erythritol. This is 4-diphosphocytidyl-2-C-methyl-D-erythritol kinase from Granulibacter bethesdensis (strain ATCC BAA-1260 / CGDNIH1).